A 128-amino-acid chain; its full sequence is Glycine cleavage system H protein (128 aa).

Positions 24 to 106 (SVTVGITAHA…YGDGWFFKIK (83 aa)) constitute a Lipoyl-binding domain. Lysine 65 is modified (N6-lipoyllysine).

This sequence belongs to the GcvH family. The glycine cleavage system is composed of four proteins: P, T, L and H. (R)-lipoate is required as a cofactor.

Functionally, the glycine cleavage system catalyzes the degradation of glycine. The H protein shuttles the methylamine group of glycine from the P protein to the T protein. The chain is Glycine cleavage system H protein from Chromobacterium violaceum (strain ATCC 12472 / DSM 30191 / JCM 1249 / CCUG 213 / NBRC 12614 / NCIMB 9131 / NCTC 9757 / MK).